A 377-amino-acid chain; its full sequence is Queuine tRNA-ribosyltransferase (377 aa).

D89 (proton acceptor) is an active-site residue. Residues D89–F93, D143, Q187, and G214 each bind substrate. The RNA binding stretch occupies residues G245 to D251. D264 serves as the catalytic Nucleophile. Residues T269–R273 are RNA binding; important for wobble base 34 recognition. The Zn(2+) site is built by C302, C304, C307, and H333.

Belongs to the queuine tRNA-ribosyltransferase family. Homodimer. Within each dimer, one monomer is responsible for RNA recognition and catalysis, while the other monomer binds to the replacement base PreQ1. Zn(2+) is required as a cofactor.

The enzyme catalyses 7-aminomethyl-7-carbaguanine + guanosine(34) in tRNA = 7-aminomethyl-7-carbaguanosine(34) in tRNA + guanine. It participates in tRNA modification; tRNA-queuosine biosynthesis. Its function is as follows. Catalyzes the base-exchange of a guanine (G) residue with the queuine precursor 7-aminomethyl-7-deazaguanine (PreQ1) at position 34 (anticodon wobble position) in tRNAs with GU(N) anticodons (tRNA-Asp, -Asn, -His and -Tyr). Catalysis occurs through a double-displacement mechanism. The nucleophile active site attacks the C1' of nucleotide 34 to detach the guanine base from the RNA, forming a covalent enzyme-RNA intermediate. The proton acceptor active site deprotonates the incoming PreQ1, allowing a nucleophilic attack on the C1' of the ribose to form the product. After dissociation, two additional enzymatic reactions on the tRNA convert PreQ1 to queuine (Q), resulting in the hypermodified nucleoside queuosine (7-(((4,5-cis-dihydroxy-2-cyclopenten-1-yl)amino)methyl)-7-deazaguanosine). In Shewanella halifaxensis (strain HAW-EB4), this protein is Queuine tRNA-ribosyltransferase.